The following is a 251-amino-acid chain: Early E1A protein (251 aa).

The tract at residues 38 to 46 (ISLHNLFDV) is interaction with RB1 in competition with E2F1. Residues 74 to 136 (SADSGAASGD…NYVNIAEGAS (63 aa)) form an interaction with UBE2I region. Positions 97–101 (LKCYE) match the LXCXE motif, interaction with host RB1 and TMEM173/STING motif. The interval 102–122 (EGLPPSGSEADEAEERAEEEE) is disordered. Residues 110-122 (EADEAEERAEEEE) are compositionally biased toward acidic residues. Residues 150 to 170 (CRACDFHRGSSGNPEAMCALC) fold into a zinc finger. Residues 240 to 244 (PLNLS) carry the PXDLS motif, CTBP-binding motif. The Nuclear localization signal motif lies at 246–250 (KRPKS).

The protein belongs to the adenoviridae E1A protein family. Interacts with host UBE2I; this interaction interferes with polySUMOylation. Interacts with host RB1; this interaction induces the aberrant dissociation of RB1-E2F1 complex thereby disrupting the activity of RB1 and activating E2F1-regulated genes. Interacts with host ATF7; the interaction enhances ATF7-mediated viral transactivation activity which requires the zinc binding domains of both proteins. Isoform early E1A 32 kDa protein and isoform early E1A 26 kDa protein interact (via N-terminus) with CUL1 and E3 ubiquitin ligase RBX1; these interactions inhibit RBX1-CUL1-dependent elongation reaction of ubiquitin chains and attenuate ubiquitination of SCF(FBXW7) target proteins. Interacts (via PXLXP motif) with host ZMYND11/BS69 (via MYND-type zinc finger); this interaction inhibits E1A mediated transactivation. Interacts with host EP300; this interaction stimulates the acetylation of RB1 by recruiting EP300 and RB1 into a multimeric-protein complex. Interacts with host CTBP1 and CTBP2; this interaction seems to potentiate viral replication. Interacts with host DCAF7. Interacts with host DYRK1A. Interacts with host KPNA4; this interaction allows E1A import into the host nucleus. Interacts with host EP400; this interaction stabilizes MYC. Interacts with host TBP protein; this interaction probably disrupts the TBP-TATA complex. Interacts (via LXCXE motif) with host TMEM173/STING; this interaction impairs the ability of TMEM173/STING to sense cytosolic DNA and promote the production of type I interferon (IFN-alpha and IFN-beta). Interacts (via C-terminus) with host ZBED1/hDREF (via C-terminus); the interaction is direct.

Its subcellular location is the host nucleus. Plays a role in viral genome replication by driving entry of quiescent cells into the cell cycle. Stimulation of progression from G1 to S phase allows the virus to efficiently use the cellular DNA replicating machinery to achieve viral genome replication. E1A protein has both transforming and trans-activating activities. Induces the disassembly of the E2F1 transcription factor from RB1 by direct competition for the same binding site on RB1, with subsequent transcriptional activation of E2F1-regulated S-phase genes and of the E2 region of the adenoviral genome. Release of E2F1 leads to the ARF-mediated inhibition of MDM2 and causes TP53/p53 to accumulate because it is not targeted for degradation by MDM2-mediated ubiquitination anymore. This increase in TP53, in turn, would arrest the cell proliferation and direct its death but this effect is counteracted by the viral protein E1B-55K. Inactivation of the ability of RB1 to arrest the cell cycle is critical for cellular transformation, uncontrolled cellular growth and proliferation induced by viral infection. Interaction with RBX1 and CUL1 inhibits ubiquitination of the proteins targeted by SCF(FBXW7) ubiquitin ligase complex, and may be linked to unregulated host cell proliferation. The tumorigenesis-restraining activity of E1A may be related to the disruption of the host CtBP-CtIP complex through the CtBP binding motif. Interaction with host TMEM173/STING impairs the ability of TMEM173/STING to sense cytosolic DNA and promote the production of type I interferon (IFN-alpha and IFN-beta). Promotes the sumoylation of host ZBED1/hDREF with SUMO1. The protein is Early E1A protein of Human adenovirus F serotype 41 (HAdV-41).